The primary structure comprises 85 residues: U1-theraphotoxin-Hs1a (85 aa).

The first 22 residues, 1–22 (MKVTLIAILTCAAVLVLHTTAA), serve as a signal peptide directing secretion. Positions 23 to 48 (EELEAESQLMEVGMPDTELAAVDEER) are excised as a propeptide. Cystine bridges form between cysteine 52/cysteine 66, cysteine 56/cysteine 77, and cysteine 71/cysteine 82.

As to quaternary structure, heterodimer composed of the two variants Ile-58 and Gln-58. In terms of tissue distribution, expressed by the venom gland.

The protein localises to the secreted. In terms of biological role, lethal neurotoxin that blocks neuromuscular transmission. Acts cooperatively to potentiate the activity of huwentoxin-I. This toxin is active against insects. In Cyriopagopus schmidti (Chinese bird spider), this protein is U1-theraphotoxin-Hs1a.